The chain runs to 365 residues: Putative ankyrin repeat protein R903 (365 aa).

ANK repeat units follow at residues 38–67 (NINS…DIRF), 68–97 (QNNE…DIFI), 99–127 (NNFC…KFSN), 129–158 (SKPI…NINK), 184–213 (KFKD…GNIT), 214–243 (VSNN…RFPR), 245–273 (SNEL…SIVD), 275–298 (LLNI…LKNV), 299–328 (NLQK…NPDE), and 330–361 (RTYL…KLQS).

This Acanthamoeba polyphaga mimivirus (APMV) protein is Putative ankyrin repeat protein R903.